The primary structure comprises 144 residues: MSGDEAVAAPVVPPVAEAAVIPEDMDVSTALELTVRKSRAYGGVVRGLHESAKLIEKRNAQLCVLAEDCNQPDYVKLVKALCADHSIKLLTVPSAKTLGEWAGLCKIDSEGNARKVVGCSCLVIKDFGEETTALNIVKKHLDSN.

S2 is subject to N-acetylserine.

Belongs to the eukaryotic ribosomal protein eS12 family.

The chain is Small ribosomal subunit protein eS12y (RPS12C) from Arabidopsis thaliana (Mouse-ear cress).